Here is a 690-residue protein sequence, read N- to C-terminus: Glycine--tRNA ligase 1, mitochondrial (690 aa).

Residues 1-24 (MSFFNISRRFYSQIVKKSVKIKRM) constitute a mitochondrion transit peptide. At Ser25 the chain carries N-acetylserine. Ser226 carries the post-translational modification Phosphoserine. Glu251 provides a ligand contact to glycine. ATP-binding positions include 283-285 (RNE) and 294-295 (RV). Glycine is bound at residue Glu302. 410-411 (EC) lines the ATP pocket. 2 positions are modified to phosphoserine: Ser476 and Ser528. Residue 531-533 (EPS) participates in glycine binding. Arg538 contacts ATP. The residue at position 689 (Thr689) is a Phosphothreonine.

It belongs to the class-II aminoacyl-tRNA synthetase family. In terms of assembly, homodimer.

It is found in the cytoplasm. Its subcellular location is the mitochondrion matrix. It catalyses the reaction tRNA(Gly) + glycine + ATP = glycyl-tRNA(Gly) + AMP + diphosphate. The catalysed reaction is 2 ATP + H(+) = P(1),P(4)-bis(5'-adenosyl) tetraphosphate + diphosphate. Catalyzes the ATP-dependent ligation of glycine to the 3'-end of its cognate tRNA, via the formation of an aminoacyl-adenylate intermediate (Gly-AMP). Also produces diadenosine tetraphosphate (Ap4A), a universal pleiotropic signaling molecule needed for cell regulation pathways, by direct condensation of 2 ATPs. Thereby, may play a special role in Ap4A homeostasis. This chain is Glycine--tRNA ligase 1, mitochondrial (GRS1), found in Saccharomyces cerevisiae (strain ATCC 204508 / S288c) (Baker's yeast).